The sequence spans 2048 residues: Fanconi anemia group M protein (2048 aa).

Positions 1 to 37 (MSGRQRTLFQTWGSSISRSSGTPGCSSGTERPQSPGS) are enriched in polar residues. Residues 1 to 45 (MSGRQRTLFQTWGSSISRSSGTPGCSSGTERPQSPGSSKAPLPAA) are disordered. Ser34 carries the post-translational modification Phosphoserine. The 169-residue stretch at 98 to 266 (ISRAALFCNT…QVITNLLIGQ (169 aa)) folds into the Helicase ATP-binding domain. 111 to 118 (LPTGLGKT) provides a ligand contact to ATP. The short motif at 214–217 (DEAH) is the DEAH box element. The Helicase C-terminal domain maps to 452-627 (KLEEVVIEHF…VLHFYQRSPR (176 aa)). The segment at 661–800 (SIFSYRDGMR…TSTFIAPRNE (140 aa)) is interaction with CENPS/CENPSX. Disordered stretches follow at residues 1433–1476 (NVLN…NFPK), 1518–1540 (LSEE…EQDS), and 1668–1809 (ILPD…HTSL). Residues 1518-1538 (LSEEDAEYVSSDENDESENEQ) show a composition bias toward acidic residues. Phosphoserine is present on residues Ser1673 and Ser1674. Polar residues-rich tracts occupy residues 1703 to 1745 (HCLN…ISEV), 1753 to 1767 (HNEV…TTVD), and 1786 to 1797 (EDSSTSGASCSK). The interval 1727–2048 (LAKQSKQTSL…LNQDRLKSDI (322 aa)) is interaction with FAAP24.

The protein belongs to the DEAD box helicase family. DEAH subfamily. FANCM sub-subfamily. As to quaternary structure, component of the Fanconi anemia (FA) core complex, which consists of CENPS, CENPX, FANCA, FANCB, FANCC, FANCE, FANCF, FANCG, FANCL, FANCM, FAAP24 and FAAP100. The FA core complex associates with Bloom syndrome (BLM) complex, which consists of at least BLM, DNA topoisomerase 3-alpha/TOP3A, RMI1/BLAP75, RPA1/RPA70 and RPA2/RPA32. This supercomplex between FA and BLM complexes has been called BRAFT. Forms a discrete complex with CENPS and CENPX, called FANCM-MHF; this interaction stimulates DNA binding and replication fork remodeling by FANCM and stabilizes the binding partners. Forms a heterodimer with FAAP24; this interaction increases FANCM single-stranded DNA-binding activity. Post-translationally, phosphorylated; hyperphosphorylated in response to genotoxic stress. In terms of tissue distribution, expressed in germ cells of fetal and adult ovaries. In fetal ovaries, it is present in oogonia but expression is stronger in pachytene stage oocytes. Expressed in oocytes arrested at the diplotene stage of prophase I during the last trimester of pregnancy and in adults. Expressed in the testis.

The protein localises to the nucleus. The enzyme catalyses ATP + H2O = ADP + phosphate + H(+). In terms of biological role, DNA-dependent ATPase component of the Fanconi anemia (FA) core complex. Required for the normal activation of the FA pathway, leading to monoubiquitination of the FANCI-FANCD2 complex in response to DNA damage, cellular resistance to DNA cross-linking drugs, and prevention of chromosomal breakage. In complex with CENPS and CENPX, binds double-stranded DNA (dsDNA), fork-structured DNA (fsDNA) and Holliday junction substrates. Its ATP-dependent DNA branch migration activity can process branched DNA structures such as a movable replication fork. This activity is strongly stimulated in the presence of CENPS and CENPX. In complex with FAAP24, efficiently binds to single-strand DNA (ssDNA), splayed-arm DNA, and 3'-flap substrates. In vitro, on its own, strongly binds ssDNA oligomers and weakly fsDNA, but does not bind to dsDNA. The sequence is that of Fanconi anemia group M protein (FANCM) from Homo sapiens (Human).